We begin with the raw amino-acid sequence, 170 residues long: NADH-quinone oxidoreductase subunit B (170 aa).

[4Fe-4S] cluster contacts are provided by cysteine 42, cysteine 43, cysteine 107, and cysteine 136.

Belongs to the complex I 20 kDa subunit family. As to quaternary structure, NDH-1 is composed of 14 different subunits. Subunits NuoB, C, D, E, F, and G constitute the peripheral sector of the complex. It depends on [4Fe-4S] cluster as a cofactor.

The protein localises to the cell inner membrane. It catalyses the reaction a quinone + NADH + 5 H(+)(in) = a quinol + NAD(+) + 4 H(+)(out). Functionally, NDH-1 shuttles electrons from NADH, via FMN and iron-sulfur (Fe-S) centers, to quinones in the respiratory chain. The immediate electron acceptor for the enzyme in this species is believed to be ubiquinone. Couples the redox reaction to proton translocation (for every two electrons transferred, four hydrogen ions are translocated across the cytoplasmic membrane), and thus conserves the redox energy in a proton gradient. The protein is NADH-quinone oxidoreductase subunit B of Campylobacter curvus (strain 525.92).